The sequence spans 80 residues: Large ribosomal subunit protein uL24 (80 aa).

The interval 53–80 is disordered; that stretch reads HMRPTQSNPQGSIIEREFPIHASNVKKS.

This sequence belongs to the universal ribosomal protein uL24 family. Part of the 50S ribosomal subunit.

Its function is as follows. One of two assembly initiator proteins, it binds directly to the 5'-end of the 23S rRNA, where it nucleates assembly of the 50S subunit. In terms of biological role, one of the proteins that surrounds the polypeptide exit tunnel on the outside of the subunit. The polypeptide is Large ribosomal subunit protein uL24 (Chlorobium luteolum (strain DSM 273 / BCRC 81028 / 2530) (Pelodictyon luteolum)).